Consider the following 895-residue polypeptide: Histone-lysine N-methyltransferase EZ3 (895 aa).

Positions Met1–Gln13 are enriched in low complexity. 2 disordered regions span residues Met1–Ser30 and Ser396–Arg446. Over residues Ser396–Pro422 the composition is skewed to polar residues. Residues Arg427–Pro436 show a composition bias toward basic residues. An SANT domain is found at Thr528–Ala578. Positions Ala628–Asp732 constitute a CXC domain. The 116-residue stretch at Gln747–Arg862 folds into the SET domain. Residues Ala870–Arg895 form a disordered region. Basic and acidic residues predominate over residues Arg873–Val885. The span at Ser886–Arg895 shows a compositional bias: basic residues.

Belongs to the class V-like SAM-binding methyltransferase superfamily. Histone-lysine methyltransferase family. EZ subfamily. In terms of tissue distribution, widely expressed.

It is found in the nucleus. It carries out the reaction L-lysyl(27)-[histone H3] + 3 S-adenosyl-L-methionine = N(6),N(6),N(6)-trimethyl-L-lysyl(27)-[histone H3] + 3 S-adenosyl-L-homocysteine + 3 H(+). Functionally, polycomb group (PcG) protein. Catalytic subunit of some PcG multiprotein complex, which methylates 'Lys-27' of histone H3, leading to transcriptional repression of the affected target genes. PcG proteins are not required to initiate repression, but to maintain it during later stages of development. The polypeptide is Histone-lysine N-methyltransferase EZ3 (EZ3) (Zea mays (Maize)).